We begin with the raw amino-acid sequence, 96 residues long: Phosphoribosyl-ATP pyrophosphatase (96 aa).

It belongs to the PRA-PH family.

Its subcellular location is the cytoplasm. It carries out the reaction 1-(5-phospho-beta-D-ribosyl)-ATP + H2O = 1-(5-phospho-beta-D-ribosyl)-5'-AMP + diphosphate + H(+). It participates in amino-acid biosynthesis; L-histidine biosynthesis; L-histidine from 5-phospho-alpha-D-ribose 1-diphosphate: step 2/9. The chain is Phosphoribosyl-ATP pyrophosphatase from Methanococcus aeolicus (strain ATCC BAA-1280 / DSM 17508 / OCM 812 / Nankai-3).